We begin with the raw amino-acid sequence, 708 residues long: Exocyst complex component 5 (708 aa).

At Ala2 the chain carries N-acetylalanine. A coiled-coil region spans residues 40–101 (KRLLEEFVNH…AFQHFQELDE (62 aa)). Phosphothreonine occurs at positions 122, 395, and 405. Ser412 bears the Phosphoserine mark.

It belongs to the SEC10 family. The exocyst complex is composed of EXOC1, EXOC2, EXOC3, EXOC4, EXOC5, EXOC6, EXOC7 and EXOC8. Interacts with EXOC3L1. As to expression, ubiquitous.

The protein resides in the cytoplasm. It localises to the midbody. Its function is as follows. Component of the exocyst complex involved in the docking of exocytic vesicles with fusion sites on the plasma membrane. The protein is Exocyst complex component 5 (EXOC5) of Homo sapiens (Human).